A 906-amino-acid polypeptide reads, in one-letter code: Ectonucleotide pyrophosphatase/phosphodiesterase family member 1 (906 aa).

The disordered stretch occupies residues 1–22 (MERDGDQAGHGPRHGSAGNGRE). Residues 1–58 (MERDGDQAGHGPRHGSAGNGRELESPAAASLLAPMDLGEEPLEKAERARPAKDPNTYK) are Cytoplasmic-facing. The residue at position 25 (Ser-25) is a Phosphoserine. Positions 27–34 (AAASLLAP) match the Di-leucine motif motif. A helical; Signal-anchor for type II membrane protein membrane pass occupies residues 59–79 (VLSLVLSVCVLTTILGCIFGL). The Extracellular portion of the chain corresponds to 80–906 (KPSCAKEVKS…THLPIFSQED (827 aa)). SMB domains lie at 86–126 (EVKS…VEPT) and 127–171 (HIWT…DKKS). Intrachain disulfides connect Cys-90–Cys-104, Cys-94–Cys-122, Cys-102–Cys-115, Cys-108–Cys-114, Cys-131–Cys-148, Cys-136–Cys-166, Cys-146–Cys-159, Cys-152–Cys-158, Cys-177–Cys-223, and Cys-185–Cys-397. Asn-161 is a glycosylation site (N-linked (GlcNAc...) asparagine). The tract at residues 173–573 (VEETCESIDT…APNNGSHGSL (401 aa)) is phosphodiesterase. AMP is bound by residues Asp-200, Thr-238, and Asn-259. 2 residues coordinate Zn(2+): Asp-200 and Thr-238. Residue Thr-238 is the AMP-threonine intermediate of the active site. CMP-binding residues include Thr-238 and Asn-259. Thr-238 and Asn-259 together coordinate dTMP. GMP-binding residues include Thr-238 and Asn-259. A Phosphothreonine modification is found at Thr-238. An N-linked (GlcNAc...) asparagine glycan is attached at Asn-267. GMP-binding residues include Leu-272, Lys-277, and Tyr-322. AMP is bound by residues Lys-277 and Tyr-322. Positions 277 and 322 each coordinate CMP. Tyr-322 is a dTMP binding site. An N-linked (GlcNAc...) asparagine glycan is attached at Asn-323. Residue Asp-358 participates in AMP binding. Residues Asp-358, His-362, Asp-405, and His-406 each coordinate Zn(2+). Asp-358 is a CMP binding site. Position 358 (Asp-358) interacts with dTMP. Residue Asp-358 participates in GMP binding. His-362 is a binding site for 2',3'-cGAMP. Residue His-406 participates in AMP binding. A CMP-binding site is contributed by His-406. His-406 contributes to the dTMP binding site. His-406 is a GMP binding site. Intrachain disulfides connect Cys-413-Cys-512, Cys-462-Cys-849, Cys-596-Cys-653, Cys-607-Cys-707, Cys-609-Cys-692, and Cys-819-Cys-829. Asn-459 carries an N-linked (GlcNAc...) asparagine glycan. Residue Ser-514 coordinates 2',3'-cGAMP. His-517 lines the AMP pocket. His-517 provides a ligand contact to Zn(2+). His-517 serves as a coordination point for CMP. His-517 is a dTMP binding site. His-517 is a GMP binding site. N-linked (GlcNAc...) asparagine glycans are attached at residues Asn-567 and Asn-624. A linker region spans residues 579–628 (KPIYNPSHPKEEGFLSQCPIKSTSNDLGCTCDPWIVPIKDFEKQLNLTTE). The interval 635 to 906 (HMTVPYGRPR…THLPIFSQED (272 aa)) is nuclease-like domain. Residues Asp-781, Asp-783, Asp-785, Arg-787, and Asp-789 each contribute to the Ca(2+) site.

It belongs to the nucleotide pyrophosphatase/phosphodiesterase family. As to quaternary structure, ectonucleotide pyrophosphatase/phosphodiesterase family member 1: Homodimer. Ectonucleotide pyrophosphatase/phosphodiesterase family member 1: Interacts with INSR; leading to inhibit INSR autophosphorylation and subsequent activation of INSR kinase activity. Ectonucleotide pyrophosphatase/phosphodiesterase family member 1, secreted form: Monomeric. Zn(2+) is required as a cofactor. In terms of processing, N-glycosylated. The secreted form is produced through cleavage at Lys-85 by intracellular processing. Selectively expressed on the surface of antibody-secreting cells. Expressed in osteocytes and osteoclasts.

The protein localises to the cell membrane. Its subcellular location is the basolateral cell membrane. The protein resides in the secreted. The enzyme catalyses Hydrolytically removes 5'-nucleotides successively from the 3'-hydroxy termini of 3'-hydroxy-terminated oligonucleotides.. The catalysed reaction is a ribonucleoside 5'-triphosphate + H2O = a ribonucleoside 5'-phosphate + diphosphate + H(+). It carries out the reaction ATP + H2O = AMP + diphosphate + H(+). It catalyses the reaction UTP + H2O = UMP + diphosphate + H(+). The enzyme catalyses GTP + H2O = GMP + diphosphate + H(+). The catalysed reaction is CTP + H2O = CMP + diphosphate + H(+). It carries out the reaction 2',3'-cGAMP + 2 H2O = GMP + AMP + 2 H(+). It catalyses the reaction P(1),P(4)-bis(5'-adenosyl) tetraphosphate + H2O = AMP + ATP + 2 H(+). The enzyme catalyses 3',5'-cyclic AMP + H2O = AMP + H(+). With respect to regulation, at low concentrations of ATP, a phosphorylated intermediate is formed which inhibits further hydrolysis. Nucleotide pyrophosphatase that generates diphosphate (PPi) and functions in bone mineralization and soft tissue calcification by regulating pyrophosphate levels. PPi inhibits bone mineralization and soft tissue calcification by binding to nascent hydroxyapatite crystals, thereby preventing further growth of these crystals. Preferentially hydrolyzes ATP, but can also hydrolyze other nucleoside 5' triphosphates such as GTP, CTP and UTP to their corresponding monophosphates with release of pyrophosphate, as well as diadenosine polyphosphates, and also 3',5'-cAMP to AMP. May also be involved in the regulation of the availability of nucleotide sugars in the endoplasmic reticulum and Golgi, and the regulation of purinergic signaling. Inhibits ectopic joint calcification and maintains articular chondrocytes by repressing hedgehog signaling; it is however unclear whether hedgehog inhibition is direct or indirect. Appears to modulate insulin sensitivity. Also involved in melanogenesis. Also able to hydrolyze 2',3'-cGAMP (cyclic GMP-AMP), a second messenger that activates TMEM173/STING and triggers type-I interferon production. 2',3'-cGAMP degradation takes place in the lumen or extracellular space, and not in the cytosol where it is produced; the role of 2',3'-cGAMP hydrolysis is therefore unclear. Not able to hydrolyze the 2',3'-cGAMP linkage isomer 3',3'-cGAMP. The protein is Ectonucleotide pyrophosphatase/phosphodiesterase family member 1 of Mus musculus (Mouse).